The chain runs to 91 residues: Putative membrane protein insertion efficiency factor (91 aa).

Residues 66–91 (GGVDPVPSCGCHSDKETTPKEKSDNA) are disordered. The span at 77–91 (HSDKETTPKEKSDNA) shows a compositional bias: basic and acidic residues.

The protein belongs to the UPF0161 family.

The protein resides in the cell inner membrane. In terms of biological role, could be involved in insertion of integral membrane proteins into the membrane. This chain is Putative membrane protein insertion efficiency factor, found in Hydrogenovibrio crunogenus (strain DSM 25203 / XCL-2) (Thiomicrospira crunogena).